The sequence spans 201 residues: tRNA (guanine-N(7)-)-methyltransferase (201 aa).

Residues Glu-33, Glu-58, Asp-85, and Asp-106 each contribute to the S-adenosyl-L-methionine site. Asp-106 is an active-site residue. Substrate is bound by residues Lys-110, Asp-142, and 180 to 183 (TTYE).

The protein belongs to the class I-like SAM-binding methyltransferase superfamily. TrmB family.

The catalysed reaction is guanosine(46) in tRNA + S-adenosyl-L-methionine = N(7)-methylguanosine(46) in tRNA + S-adenosyl-L-homocysteine. Its pathway is tRNA modification; N(7)-methylguanine-tRNA biosynthesis. Catalyzes the formation of N(7)-methylguanine at position 46 (m7G46) in tRNA. The polypeptide is tRNA (guanine-N(7)-)-methyltransferase (Mesomycoplasma hyopneumoniae (strain 232) (Mycoplasma hyopneumoniae)).